Here is a 221-residue protein sequence, read N- to C-terminus: UPF0758 protein YicR (221 aa).

Residues Ala99–Ile221 enclose the MPN domain. 3 residues coordinate Zn(2+): His170, His172, and Asp183. A JAMM motif motif is present at residues His170–Asp183.

The protein belongs to the UPF0758 family. YicR subfamily.

This chain is UPF0758 protein YicR, found in Salmonella agona (strain SL483).